Here is a 534-residue protein sequence, read N- to C-terminus: Cytochalasin cluster regulator ccsR (534 aa).

The zn(2)-C6 fungal-type DNA-binding region spans 13 to 54; that stretch reads CDRCRRQKLRCVRPLKHGACEHPNNIEALEPCERCSRAGTPC. 2 disordered regions span residues 88 to 170 and 350 to 378; these read IPKQ…LDAP and TSARPEFRDSSDMCASSSNRDSSDLSAAS. Over residues 109–125 the composition is skewed to polar residues; the sequence is TGQNKGINDANAVTGSL. Over residues 130–146 the composition is skewed to basic and acidic residues; the sequence is PDHRSGSNVHRQPEARP. A compositionally biased stretch (low complexity) spans 361 to 378; the sequence is DMCASSSNRDSSDLSAAS.

It is found in the nucleus. Transcription factor involved in regulation of gene cluster that mediates the biosynthesis of the mycotoxins cytochalasins E and K. The sequence is that of Cytochalasin cluster regulator ccsR from Aspergillus clavatus (strain ATCC 1007 / CBS 513.65 / DSM 816 / NCTC 3887 / NRRL 1 / QM 1276 / 107).